The sequence spans 582 residues: Threonine--tRNA ligase (582 aa).

A catalytic region spans residues 185-478 (DHRKLGKELE…LTEQYGGAFP (294 aa)). Residues Cys278, His329, and His455 each coordinate Zn(2+).

The protein belongs to the class-II aminoacyl-tRNA synthetase family. As to quaternary structure, homodimer. The cofactor is Zn(2+).

It localises to the cytoplasm. The catalysed reaction is tRNA(Thr) + L-threonine + ATP = L-threonyl-tRNA(Thr) + AMP + diphosphate + H(+). Functionally, catalyzes the attachment of threonine to tRNA(Thr) in a two-step reaction: L-threonine is first activated by ATP to form Thr-AMP and then transferred to the acceptor end of tRNA(Thr). Also edits incorrectly charged L-seryl-tRNA(Thr). This Dehalococcoides mccartyi (strain ATCC BAA-2266 / KCTC 15142 / 195) (Dehalococcoides ethenogenes (strain 195)) protein is Threonine--tRNA ligase.